We begin with the raw amino-acid sequence, 354 residues long: Squamosa promoter-binding-like protein 15 (354 aa).

The segment at 1 to 25 (MELLMCSGQAESGGSSSTESSSLSG) is disordered. Positions 7–25 (SGQAESGGSSSTESSSLSG) are enriched in low complexity. The SBP-type zinc-finger motif lies at 56-133 (TARCQVEGCR…ACHNERRRKP (78 aa)). Zn(2+) contacts are provided by cysteine 59, cysteine 64, cysteine 81, histidine 84, cysteine 100, cysteine 103, histidine 107, and cysteine 119. Residues 116 to 132 (KRSCRRRLACHNERRRK) carry the Bipartite nuclear localization signal motif.

Zn(2+) is required as a cofactor.

It localises to the nucleus. In terms of biological role, trans-acting factor that binds specifically to the consensus nucleotide sequence 5'-TNCGTACAA-3'. This chain is Squamosa promoter-binding-like protein 15 (SPL15), found in Arabidopsis thaliana (Mouse-ear cress).